The sequence spans 275 residues: Axoneme-associated protein mst101(3) (275 aa).

A run of 12 repeats spans residues 64–79, 80–95, 96–111, 112–127, 128–143, 144–159, 160–175, 181–196, 197–212, 215–230, 231–246, and 249–264. Residues 64–264 form a 12 X 16 AA tandem repeats of [KRA]-K-[KEM]-[CKA]-[AEKD]-[EA]-[ALE]-[AMK]-[FKAML]-[KQA]-[EQKA]-[KQCEM]-[ECLA]-[AEQ]-[AEQ]-[EQAKV] region; sequence KKKCAEAAKK…AALQKKCAEA (201 aa).

Testis.

It localises to the cytoplasm. Possible structural role in the sperm tail. The polypeptide is Axoneme-associated protein mst101(3) (mst101(3)) (Drosophila hydei (Fruit fly)).